The primary structure comprises 460 residues: Argininosuccinate lyase (460 aa).

It belongs to the lyase 1 family. Argininosuccinate lyase subfamily.

The protein resides in the cytoplasm. The enzyme catalyses 2-(N(omega)-L-arginino)succinate = fumarate + L-arginine. It participates in amino-acid biosynthesis; L-arginine biosynthesis; L-arginine from L-ornithine and carbamoyl phosphate: step 3/3. This chain is Argininosuccinate lyase, found in Buchnera aphidicola subsp. Cinara cedri (strain Cc).